A 334-amino-acid chain; its full sequence is Putative transport protein MJ1177 (334 aa).

A run of 7 helical transmembrane segments spans residues 13–33, 61–81, 138–158, 191–211, 234–254, 259–279, and 293–313; these read VIVGLLIMLLYIIWPFIDVLA, LAISIYILPIMTITIYALLTF, IIDVGYLIVKVIMVLFLTFYF, SYKNLFISCVSLSIIITILSY, LLPILGGWMVYISIAIYFFLI, KAVFMFIYGELFLSIAPDFVI, and VLVVIAFLMAPLSLGLSGFAI.

The protein belongs to the autoinducer-2 exporter (AI-2E) (TC 2.A.86) family.

Its subcellular location is the cell membrane. This Methanocaldococcus jannaschii (strain ATCC 43067 / DSM 2661 / JAL-1 / JCM 10045 / NBRC 100440) (Methanococcus jannaschii) protein is Putative transport protein MJ1177.